Reading from the N-terminus, the 1199-residue chain is Ecdysone-induced protein 75B, isoforms C/D (1199 aa).

Positions 130-182 are disordered; the sequence is TTDGPTAVLQQQQPQQQMPQHFESLPHHHPQQEHQPQQQQQQHHLQHHPHPHV. Composition is skewed to low complexity over residues 139-149 and 162-172; these read QQQQPQQQMPQ and EHQPQQQQQQH. Positions 242 to 318 form a DNA-binding region, nuclear receptor; that stretch reads TVLCRVCGDK…VGMSRDAVRF (77 aa). 2 consecutive NR C4-type zinc fingers follow at residues 245–265 and 282–306; these read CRVC…CEGC and CTKN…LKKC. One can recognise an NR LBD domain in the interval 352–600; the sequence is DQPRLLAAVL…QQMWSMEDGN (249 aa). Disordered stretches follow at residues 624–665, 771–808, 831–851, 895–961, 991–1104, and 1155–1188; these read KSPL…SALA, LDSP…SVDD, VSVS…KRQI, AEAD…SSHS, ENST…SNSA, and VTVT…NPGL. Low complexity-rich tracts occupy residues 641–653, 792–804, 831–845, 897–942, and 950–961; these read GSPS…GVSL, SSGG…SPRS, VSVS…STSS, ADAS…AQSQ, and SSPKASMASSHS. Composition is skewed to polar residues over residues 993–1006 and 1018–1040; these read STAA…VGNR and AVQN…QRQQ. Low complexity-rich tracts occupy residues 1041 to 1077, 1086 to 1104, and 1159 to 1187; these read SVSP…SASS, STSN…SNSA, and ASNG…PNPG.

It belongs to the nuclear hormone receptor family. NR1 subfamily.

Its subcellular location is the nucleus. In terms of biological role, implicated in the regulation of ecdysone-triggered gene hierarchies. Probably plays a key role in mediating the regulation of the larval molt by 20-OH-ecdysone. The chain is Ecdysone-induced protein 75B, isoforms C/D (Eip75B) from Drosophila melanogaster (Fruit fly).